A 545-amino-acid chain; its full sequence is Thermosome subunit beta (545 aa).

This sequence belongs to the TCP-1 chaperonin family. In terms of assembly, forms a Heterooligomeric complex of two stacked eight-membered rings.

Its function is as follows. Molecular chaperone; binds unfolded polypeptides in vitro, and has a weak ATPase activity. The polypeptide is Thermosome subunit beta (thsB) (Archaeoglobus fulgidus (strain ATCC 49558 / DSM 4304 / JCM 9628 / NBRC 100126 / VC-16)).